The following is a 355-amino-acid chain: Neutral protease 2 homolog AFUB_100460 (355 aa).

The signal sequence occupies residues 1 to 19 (MKITALASAILAVAQGALA). Positions 20–172 (LPARAPALDI…PASIKPLDRR (153 aa)) are excised as a propeptide. Disulfide bonds link C179/C251 and C258/C276. H300 is a binding site for Zn(2+). E301 is a catalytic residue. 2 residues coordinate Zn(2+): H304 and D315.

Belongs to the peptidase M35 family. The cofactor is Zn(2+).

It is found in the secreted. The catalysed reaction is Preferential cleavage of bonds with hydrophobic residues in P1'. Also 3-Asn-|-Gln-4 and 8-Gly-|-Ser-9 bonds in insulin B chain.. Functionally, secreted metalloproteinase that allows assimilation of proteinaceous substrates. Shows high activities on basic nuclear substrates such as histone and protamine. May be involved in virulence. The polypeptide is Neutral protease 2 homolog AFUB_100460 (Aspergillus fumigatus (strain CBS 144.89 / FGSC A1163 / CEA10) (Neosartorya fumigata)).